We begin with the raw amino-acid sequence, 293 residues long: N-acetylneuraminate lyase (293 aa).

2 residues coordinate aceneuramate: S48 and S49. The active-site Proton donor is Y137. Catalysis depends on K165, which acts as the Schiff-base intermediate with substrate. Aceneuramate is bound by residues T167, G189, D191, E192, and S208.

Belongs to the DapA family. NanA subfamily. Homotetramer.

It is found in the cytoplasm. It carries out the reaction aceneuramate = aldehydo-N-acetyl-D-mannosamine + pyruvate. It participates in amino-sugar metabolism; N-acetylneuraminate degradation; D-fructose 6-phosphate from N-acetylneuraminate: step 1/5. Functionally, catalyzes the reversible aldol cleavage of N-acetylneuraminic acid (sialic acid; Neu5Ac) to form pyruvate and N-acetylmannosamine (ManNAc) via a Schiff base intermediate. The chain is N-acetylneuraminate lyase from Staphylococcus carnosus (strain TM300).